A 260-amino-acid polypeptide reads, in one-letter code: MFEARLVQGSILKKVLEALKDLITEACWDVSSSGISLQSMDSSHVSLVQLTLRSDGFDSYRCDRNLAMGVNLSSMSKILKCAGNEDIITLRAEDNADALALVFETLNQEKVSDYEMKLMDLDVEQLGIPEQEYSCVVKMPSGEFARICRDLSQIGDAVMISCAKDGVKFSASGELGTGNIKLSQTSNVDKEDEAVTIEMNEPVQLIFALNYLNFFTKATPLSKTVTLSMSADIPLVVEYKIADMGHVKYYLAPKIDEESS.

The DNA-binding element occupies 61 to 80 (RCDRNLAMGVNLSSMSKILK). Lysine 164 participates in a covalent cross-link: Glycyl lysine isopeptide (Lys-Gly) (interchain with G-Cter in ubiquitin). Serine 259 and serine 260 each carry phosphoserine.

It belongs to the PCNA family. As to quaternary structure, homotrimer. Forms a complex with activator 1 heteropentamer in the presence of ATP. Component of the replisome complex. Post-translationally, monoubiquitinated by the ube2b-rad18 complex on Lys-164. Monoubiquitination at Lys-164 also takes place in undamaged proliferating cells, and is mediated by the dcx(dtl) complex, leading to enhance PCNA-dependent translesion DNA synthesis.

Its subcellular location is the nucleus. In terms of biological role, this protein is an auxiliary protein of DNA polymerase delta and is involved in the control of eukaryotic DNA replication by increasing the polymerase's processibility during elongation of the leading strand. The sequence is that of Proliferating cell nuclear antigen (pcna) from Danio rerio (Zebrafish).